Here is a 264-residue protein sequence, read N- to C-terminus: 3-methyl-2-oxobutanoate hydroxymethyltransferase (264 aa).

Residues Asp-45 and Asp-84 each coordinate Mg(2+). Residues 45 to 46, Asp-84, and Lys-112 each bind 3-methyl-2-oxobutanoate; that span reads DS. Position 114 (Glu-114) interacts with Mg(2+). Residue Glu-181 is the Proton acceptor of the active site.

It belongs to the PanB family. In terms of assembly, homodecamer; pentamer of dimers. It depends on Mg(2+) as a cofactor.

The protein resides in the cytoplasm. It carries out the reaction 3-methyl-2-oxobutanoate + (6R)-5,10-methylene-5,6,7,8-tetrahydrofolate + H2O = 2-dehydropantoate + (6S)-5,6,7,8-tetrahydrofolate. It participates in cofactor biosynthesis; (R)-pantothenate biosynthesis; (R)-pantoate from 3-methyl-2-oxobutanoate: step 1/2. Functionally, catalyzes the reversible reaction in which hydroxymethyl group from 5,10-methylenetetrahydrofolate is transferred onto alpha-ketoisovalerate to form ketopantoate. The protein is 3-methyl-2-oxobutanoate hydroxymethyltransferase of Aeromonas salmonicida (strain A449).